Here is a 262-residue protein sequence, read N- to C-terminus: Small ribosomal subunit protein uS2 (262 aa).

The disordered stretch occupies residues 223–262 (KSLLEQDGGEQAAGEEVSQDEKDAVVAEAMSEEDFGEDEE). Low complexity predominate over residues 227–238 (EQDGGEQAAGEE). Positions 252 to 262 (MSEEDFGEDEE) are enriched in acidic residues.

It belongs to the universal ribosomal protein uS2 family.

The protein is Small ribosomal subunit protein uS2 of Campylobacter concisus (strain 13826).